The sequence spans 469 residues: Glutamate--tRNA ligase 1 (469 aa).

Positions Pro-8–Gly-18 match the 'HIGH' region motif. A disordered region spans residues Thr-117–Ala-137. The short motif at Lys-240 to Arg-244 is the 'KMSKS' region element. Lys-243 serves as a coordination point for ATP.

The protein belongs to the class-I aminoacyl-tRNA synthetase family. Glutamate--tRNA ligase type 1 subfamily. As to quaternary structure, monomer.

The protein localises to the cytoplasm. The catalysed reaction is tRNA(Glu) + L-glutamate + ATP = L-glutamyl-tRNA(Glu) + AMP + diphosphate. Catalyzes the attachment of glutamate to tRNA(Glu) in a two-step reaction: glutamate is first activated by ATP to form Glu-AMP and then transferred to the acceptor end of tRNA(Glu). The protein is Glutamate--tRNA ligase 1 of Aliarcobacter butzleri (strain RM4018) (Arcobacter butzleri).